A 504-amino-acid polypeptide reads, in one-letter code: Transcriptional coactivator YAP1 (504 aa).

Composition is skewed to pro residues over residues 1 to 12 (MDPGQQPPPQPA) and 20 to 36 (PSQPPQGQGPPSGPGQP). Positions 1–59 (MDPGQQPPPQPAPQGQGQPPSQPPQGQGPPSGPGQPAPAATQAAPQAPPAGHQIVHVRG) are disordered. Positions 37-51 (APAATQAAPQAPPAG) are enriched in low complexity. A Phosphoserine; by LATS1 and LATS2 modification is found at serine 61. Threonine 63 carries the phosphothreonine modification. A coiled-coil region spans residues 86 to 100 (MRLRKLPDSFFKPPE). Lysine 90 is subject to N6-lactoyllysine. Residues 91–114 (LPDSFFKPPEPKSHSRQASTDAGT) form a disordered region. Serine 105 carries the post-translational modification Phosphoserine. Serine 109 is subject to Phosphoserine; by LATS1 and LATS2. Position 110 is a phosphothreonine (threonine 110). Threonine 119 bears the Phosphothreonine; by MAPK8 and MAPK9 mark. Residue serine 127 is modified to Phosphoserine; by LATS1 and LATS2. A phosphoserine mark is found at serine 128 and serine 131. The segment at 133-158 (QLGAVSPGTLTPTGVVSGPAATPTAQ) is disordered. At serine 138 the chain carries Phosphoserine; by MAPK8 and MAPK9. Threonine 154 bears the Phosphothreonine; by MAPK8 and MAPK9 mark. Residue serine 164 is modified to Phosphoserine; by LATS1 and LATS2. WW domains lie at 171–204 (VPLPAGWEMAKTSSGQRYFLNHIDQTTTWQDPRK) and 230–263 (GPLPDGWEQAMTQDGEIYYINHKNKTTSWLDPRL). A phosphoserine mark is found at serine 274 and serine 289. Disordered regions lie at residues 275–309 (QSAPVKQPPPLAPQSPQGGVMGGSNSNQQQQMRLQ) and 355–407 (LEQD…MSSY). A transactivation domain region spans residues 291-504 (QGGVMGGSNS…LDKESFLTWL (214 aa)). The stretch at 298 to 359 (SNSNQQQQMR…SQLPTLEQDG (62 aa)) forms a coiled coil. Positions 355 to 391 (LEQDGGTQNPVSSPGMSQELRTMTTNSSDPFLNSGTY) are enriched in polar residues. Phosphoserine; by MAPK8 and MAPK9 is present on serine 367. A phosphoserine mark is found at serine 371, serine 381, serine 382, and serine 388. Serine 397 is modified (phosphoserine; by LATS1 and LATS2). Residues serine 400 and serine 403 each carry the phosphoserine; by CK1 modification. Phosphotyrosine; by ABL1 is present on tyrosine 407. Position 412 is a phosphothreonine; by MAPK8 and MAPK9 (threonine 412).

The protein belongs to the YAP1 family. In terms of assembly, part of a complex when phosphorylated that contains DSG3, PKP1, YAP1 and YWHAG; the complex is required for localization of DSG3 and YAP1 to the cell membrane in keratinocytes. Binds to the SH3 domain of the YES kinase. Binds to WBP1 and WBP2. Binds, in vitro, through the WW1 domain, to neural isoforms of ENAH that contain the PPSY motif. The phosphorylated form interacts with YWHAB. Interacts (via WW domains) with LATS1 (via PPxY motif 2). Interacts with LATS2. Interacts with TEAD1, TEAD2, TEAD3 and TEAD4. Interacts with TP73. Interacts with RUNX1. Interacts with HCK. Interacts (via WW domains) with PTPN14 (via PPxY motif 2); this interaction leads to the cytoplasmic sequestration of YAP1 and inhibits its transcriptional coactivator activity. Interacts (when phosphorylated at Ser-127) with SMAD2, SMAD3 and WWTR1. Interacts with PRRG2 (via cytoplasmic domain). Interacts (via WW domains) with PRRG4 (via cytoplasmic domain). Interacts (phosphorylated) with CLDN18; the interaction sequesters YAP1 away from the nucleus and thereby restricts transcription of YAP1 target genes. Interacts with SMAD1. Interacts with AMOTL2, the interaction is required for ubiquitination of AMOTL2 and localization of YAP1 to tight junctions. Interacts with AMOT isoform 1; the interaction facilitates translocation of YAP1 to the cytoplasm and tight junctions. Interacts (via WW domain 1) with isoform 3 of ERBB4 (via PPxY motif 2). Phosphorylated by LATS1 and LATS2; leading to cytoplasmic translocation and inactivation. Phosphorylated by ABL1; leading to YAP1 stabilization, enhanced interaction with TP73 and recruitment onto proapoptotic genes; in response to DNA damage. Phosphorylation at Ser-400 and Ser-403 by CK1 is triggered by previous phosphorylation at Ser-397 by LATS proteins and leads to YAP1 ubiquitination by SCF(beta-TRCP) E3 ubiquitin ligase and subsequent degradation. Phosphorylated at Thr-119, Ser-138, Thr-154, Ser-367 and Thr-412 by MAPK8/JNK1 and MAPK9/JNK2, which is required for the regulation of apoptosis by YAP1. Phosphorylated in the nucleus by PRP4K; phosphorylation leads to nuclear exclusion. In terms of processing, lactylation by AARS1 promotes nuclear localization and stabilization of YAP1, leading to increased Hippo signaling pathway. Delactylated by SIRT1. Post-translationally, ubiquitinated by SCF(beta-TRCP) E3 ubiquitin ligase. In terms of tissue distribution, increased expression seen in some liver and prostate cancers. Isoforms lacking the transactivation domain found in striatal neurons of patients with Huntington disease (at protein level).

The protein resides in the cytoplasm. Its subcellular location is the nucleus. The protein localises to the cell junction. It is found in the tight junction. It localises to the cell membrane. Functionally, transcriptional regulator with dual roles as a coactivator and corepressor. Critical downstream regulatory target in the Hippo signaling pathway, crucial for organ size control and tumor suppression by restricting proliferation and promoting apoptosis. The Hippo signaling pathway core involves a kinase cascade featuring STK3/MST2 and STK4/MST1, along with its regulatory partner SAV1, which phosphorylates and activates LATS1/2 in complex with their regulatory protein, MOB1. This activation leads to the phosphorylation and inactivation of the YAP1 oncoprotein and WWTR1/TAZ. Phosphorylation of YAP1 by LATS1/2 prevents its nuclear translocation, thereby regulating the expression of its target genes. The transcriptional regulation of gene expression requires TEAD transcription factors and modulates cell growth, anchorage-independent growth, and induction of epithelial-mesenchymal transition (EMT). Plays a key role in tissue tension and 3D tissue shape by regulating the cortical actomyosin network, acting via ARHGAP18, a Rho GTPase activating protein that suppresses F-actin polymerization. It also suppresses ciliogenesis by acting as a transcriptional corepressor of TEAD4 target genes AURKA and PLK1. In conjunction with WWTR1, regulates TGFB1-dependent SMAD2 and SMAD3 nuclear accumulation. Synergizes with WBP2 to enhance PGR activity. Its function is as follows. Activates the C-terminal fragment (CTF) of ERBB4 (isoform 3). In Homo sapiens (Human), this protein is Transcriptional coactivator YAP1.